Reading from the N-terminus, the 422-residue chain is DNA-binding transcriptional activator AdeR (422 aa).

Belongs to the CdaR family.

In terms of biological role, activates ald expression in response to alanine availability and is important for normal sporulation in B.subtilis. The polypeptide is DNA-binding transcriptional activator AdeR (Bacillus subtilis (strain 168)).